The following is an 860-amino-acid chain: Leucine--tRNA ligase (860 aa).

The 'HIGH' region motif lies at 42–52 (PYPSGRLHMGH). Residues 619–623 (KMSKS) carry the 'KMSKS' region motif. Lys-622 is an ATP binding site.

The protein belongs to the class-I aminoacyl-tRNA synthetase family.

The protein localises to the cytoplasm. The enzyme catalyses tRNA(Leu) + L-leucine + ATP = L-leucyl-tRNA(Leu) + AMP + diphosphate. This Escherichia coli O157:H7 protein is Leucine--tRNA ligase.